The chain runs to 126 residues: Large ribosomal subunit protein bL19 (126 aa).

This sequence belongs to the bacterial ribosomal protein bL19 family.

In terms of biological role, this protein is located at the 30S-50S ribosomal subunit interface and may play a role in the structure and function of the aminoacyl-tRNA binding site. In Albidiferax ferrireducens (strain ATCC BAA-621 / DSM 15236 / T118) (Rhodoferax ferrireducens), this protein is Large ribosomal subunit protein bL19.